Here is a 229-residue protein sequence, read N- to C-terminus: Isopentenyl-diphosphate delta-isomerase (229 aa).

Residue lysine 39 participates in substrate binding. Residues histidine 43 and histidine 54 each contribute to the Mg(2+) site. The region spanning 52 to 202 is the Nudix hydrolase domain; that stretch reads LLHRAFSMFI…QYGFTPWFKL (151 aa). Glutamine 72 and lysine 77 together coordinate substrate. Cysteine 89 is an active-site residue. Residue serine 90 participates in substrate binding. Positions 152 and 154 each coordinate Mg(2+). Glutamate 154 is a catalytic residue.

This sequence belongs to the IPP isomerase type 1 family. Mg(2+) serves as cofactor.

The protein resides in the cytoplasm. It localises to the nucleus. The catalysed reaction is isopentenyl diphosphate = dimethylallyl diphosphate. Its pathway is isoprenoid biosynthesis; dimethylallyl diphosphate biosynthesis; dimethylallyl diphosphate from isopentenyl diphosphate: step 1/1. Isopentenyl-diphosphate delta-isomerase; part of the second module of ergosterol biosynthesis pathway that includes the middle steps of the pathway. Idi1 catalyzes the 1,3-allylic rearrangement of isopentenyl (IPP) to its highly electrophilic allylic isomer, dimethylallyl diphosphate (DMAPP). The second module is carried out in the vacuole and involves the formation of farnesyl diphosphate, which is also an important intermediate in the biosynthesis of ubiquinone, dolichol, heme and prenylated proteins. Activity by the mevalonate kinase erg12 first converts mevalonate into 5-phosphomevalonate. 5-phosphomevalonate is then further converted to 5-diphosphomevalonate by the phosphomevalonate kinase erg8. The diphosphomevalonate decarboxylase mvd1 then produces isopentenyl diphosphate. The isopentenyl-diphosphate delta-isomerase idi1 then catalyzes the 1,3-allylic rearrangement of the homoallylic substrate isopentenyl (IPP) to its highly electrophilic allylic isomer, dimethylallyl diphosphate (DMAPP). Finally the farnesyl diphosphate synthase fps1 catalyzes the sequential condensation of isopentenyl pyrophosphate with dimethylallyl pyrophosphate, and then with the resultant geranylpyrophosphate to the ultimate product farnesyl pyrophosphate. In Schizosaccharomyces pombe (strain 972 / ATCC 24843) (Fission yeast), this protein is Isopentenyl-diphosphate delta-isomerase.